The following is a 191-amino-acid chain: Cdc42 homolog (191 aa).

10–17 serves as a coordination point for GTP; it reads GDGAVGKT. The Effector region signature appears at 32-40; sequence YVPTVFDNY. GTP contacts are provided by residues 57-61 and 115-118; these read DTAGQ and TQID. Cys188 bears the Cysteine methyl ester mark. Cys188 carries S-geranylgeranyl cysteine lipidation. Residues 189-191 constitute a propeptide, removed in mature form; it reads KFL.

It belongs to the small GTPase superfamily. Rho family. CDC42 subfamily.

It localises to the cell junction. It is found in the adherens junction. Its subcellular location is the cell membrane. In terms of biological role, regulates mbt kinase activity and is also required to recruit mbt to adherens junctions. Together with mbt, regulates photoreceptor cell morphogenesis. This is Cdc42 homolog from Aedes aegypti (Yellowfever mosquito).